A 135-amino-acid chain; its full sequence is ATP synthase epsilon chain (135 aa).

This sequence belongs to the ATPase epsilon chain family. F-type ATPases have 2 components, CF(1) - the catalytic core - and CF(0) - the membrane proton channel. CF(1) has five subunits: alpha(3), beta(3), gamma(1), delta(1), epsilon(1). CF(0) has three main subunits: a, b and c.

It localises to the cell inner membrane. Functionally, produces ATP from ADP in the presence of a proton gradient across the membrane. This is ATP synthase epsilon chain from Desulforapulum autotrophicum (strain ATCC 43914 / DSM 3382 / VKM B-1955 / HRM2) (Desulfobacterium autotrophicum).